Consider the following 191-residue polypeptide: 3-isopropylmalate dehydratase small subunit (191 aa).

The protein belongs to the LeuD family. LeuD type 1 subfamily. In terms of assembly, heterodimer of LeuC and LeuD.

The enzyme catalyses (2R,3S)-3-isopropylmalate = (2S)-2-isopropylmalate. It functions in the pathway amino-acid biosynthesis; L-leucine biosynthesis; L-leucine from 3-methyl-2-oxobutanoate: step 2/4. Catalyzes the isomerization between 2-isopropylmalate and 3-isopropylmalate, via the formation of 2-isopropylmaleate. The sequence is that of 3-isopropylmalate dehydratase small subunit from Anaeromyxobacter sp. (strain K).